Reading from the N-terminus, the 141-residue chain is Large ribosomal subunit protein uL11 (141 aa).

Belongs to the universal ribosomal protein uL11 family. Part of the ribosomal stalk of the 50S ribosomal subunit. Interacts with L10 and the large rRNA to form the base of the stalk. L10 forms an elongated spine to which L12 dimers bind in a sequential fashion forming a multimeric L10(L12)X complex. In terms of processing, one or more lysine residues are methylated.

Its function is as follows. Forms part of the ribosomal stalk which helps the ribosome interact with GTP-bound translation factors. This is Large ribosomal subunit protein uL11 from Picosynechococcus sp. (strain ATCC 27264 / PCC 7002 / PR-6) (Agmenellum quadruplicatum).